Here is a 370-residue protein sequence, read N- to C-terminus: MTDYLHSPLHAEHEKLGATFTPFGPWEMPLKYDNELEEHRAVRNAAGLFDLSHMGEIWVNGPDAAEFLSYCFISNLTTLKEGKAKYSMICAEDGGIIDDLITYRLEETKFLVVPNAGNADTVWDALNERAEGFDVDLKNESRDVAMIAVQGPKALEILVPLVEDTKQQAVMDLPYYAAMTGKVARKYAFICRTGYTGEDGFELIVYNSDAPELWEELLKAGEEYGIKPCGLAARDSLRLEAGMPLYGNELTRDITPVEAGMSRAFAKKEQDFVGAEVLRQRAEEGPQAVITGLVSSQRRAARAGSEVYVGENKVGTVTSGQPSPTLGHPVALALIDTAAGLEPGAAVEVDIRGKRYPFEVSALPFYKRDK.

It belongs to the GcvT family. In terms of assembly, the glycine cleavage system is composed of four proteins: P, T, L and H.

It catalyses the reaction N(6)-[(R)-S(8)-aminomethyldihydrolipoyl]-L-lysyl-[protein] + (6S)-5,6,7,8-tetrahydrofolate = N(6)-[(R)-dihydrolipoyl]-L-lysyl-[protein] + (6R)-5,10-methylene-5,6,7,8-tetrahydrofolate + NH4(+). Its function is as follows. The glycine cleavage system catalyzes the degradation of glycine. The protein is Aminomethyltransferase of Corynebacterium aurimucosum (strain ATCC 700975 / DSM 44827 / CIP 107346 / CN-1) (Corynebacterium nigricans).